Consider the following 212-residue polypeptide: MAGVRVKICGLRTESDVKAAASSGAAYVGLVFFPKSPRHLELAQAQRLALAAPPGVAKVALTVDASDETLDAIVEAVPLDMLQLHGGESPERVAEVRARYGLPVMKAVGVADEGDLPQILEQSLAADQILIDAKPPKGAALPGGNGLSFDWRLISGRHWIRPWMLAGGLTVENLAEAVRRTGASQVDVSSGVESAPGVKDPARIAAFLQAAR.

It belongs to the TrpF family.

It catalyses the reaction N-(5-phospho-beta-D-ribosyl)anthranilate = 1-(2-carboxyphenylamino)-1-deoxy-D-ribulose 5-phosphate. It functions in the pathway amino-acid biosynthesis; L-tryptophan biosynthesis; L-tryptophan from chorismate: step 3/5. The sequence is that of N-(5'-phosphoribosyl)anthranilate isomerase (trpF) from Cereibacter sphaeroides (strain ATCC 17023 / DSM 158 / JCM 6121 / CCUG 31486 / LMG 2827 / NBRC 12203 / NCIMB 8253 / ATH 2.4.1.) (Rhodobacter sphaeroides).